A 417-amino-acid chain; its full sequence is MLKKDMNIADYDPELFKAIQNETLRQEEHIELIASENYTSPRVMEAQGSQLTNKYAEGYPGKRYYGGCEYVDVVETLAIERAKELFSATYANVQPHSGSQANSAVYMALLKPGDTVLGMNLAHGGHLTHGSPVNFSGKLYNIIPYGIDESGKIDYDEMERLAVEHKPKMMIGGFSAYSGIVDWAKMREIADKIGAYLFVDMAHVAGLIAAGVYPNPVPHAHVVTSTTHKTLAGPRGGVILSAADDEDLYKKLNSAVFPGGQGGPLMHVIAGKAVAFKEALEPEFKVYQQQVVNNAKAMVEVFLERGYKIVSGGTSNHLMLVDLIGRDLTGKEADAALGSANITVNKNSVPNDPRSPFVTSGVRIGTPAITRRGFKEAESKELTGWICDILDDANNPAVIERVKGQVLALCARFPVYG.

(6S)-5,6,7,8-tetrahydrofolate is bound by residues L121 and 125-127 (GHL). K229 is subject to N6-(pyridoxal phosphate)lysine. (6S)-5,6,7,8-tetrahydrofolate is bound at residue 355–357 (SPF).

The protein belongs to the SHMT family. In terms of assembly, homodimer. It depends on pyridoxal 5'-phosphate as a cofactor.

Its subcellular location is the cytoplasm. It catalyses the reaction (6R)-5,10-methylene-5,6,7,8-tetrahydrofolate + glycine + H2O = (6S)-5,6,7,8-tetrahydrofolate + L-serine. The protein operates within one-carbon metabolism; tetrahydrofolate interconversion. It functions in the pathway amino-acid biosynthesis; glycine biosynthesis; glycine from L-serine: step 1/1. Catalyzes the reversible interconversion of serine and glycine with tetrahydrofolate (THF) serving as the one-carbon carrier. This reaction serves as the major source of one-carbon groups required for the biosynthesis of purines, thymidylate, methionine, and other important biomolecules. Also exhibits THF-independent aldolase activity toward beta-hydroxyamino acids, producing glycine and aldehydes, via a retro-aldol mechanism. The protein is Serine hydroxymethyltransferase of Shewanella baltica (strain OS185).